Consider the following 1425-residue polypeptide: Nephrocystin-4 (1425 aa).

Ser145 bears the Phosphoserine mark. Positions 448 to 554 (FSLSSDGPTE…VSHLEADLSQ (107 aa)) are disordered. 2 stretches are compositionally biased toward low complexity: residues 473–484 (PASPSGTPAPAA) and 507–530 (SPLS…SQSP). Residues 822–1425 (LTLANVGHAC…ETFCVKVLYQ (604 aa)) form a sufficient for basal bodies localization region.

It belongs to the NPHP4 family. Interacts with NPHP1 and RPGRIP1L/NPHP8; NPHP1, NPHP4 and RPGRIP1L are proposed to form a functional NPHP1-4-8 module localized to cell-cell contacts and the ciliary transition zone; NPHP4 mediates the interaction between NPHP1 and RPGRIP1L. Interacts with IQCB1/NPHP5; the interaction likely requires additional interactors. Interacts with RPGRIP1, CEP164, JADE1, PALS1, INADL, PARD6A, INVS, DVL2. Interacts with INTU; INTU mediates the interaction between NPHP4 and DAAM1. Interacts with JADE1. Interacts with SPATA7. In terms of tissue distribution, expressed in the retina (at protein level).

The protein localises to the cytoplasm. The protein resides in the cytoskeleton. It localises to the cilium basal body. Its subcellular location is the microtubule organizing center. It is found in the centrosome. The protein localises to the cell junction. The protein resides in the tight junction. Involved in the organization of apical junctions; the function is proposed to implicate a NPHP1-4-8 module. Does not seem to be strictly required for ciliogenesis. Required for building functional cilia. Involved in the organization of the subapical actin network in multiciliated epithelial cells. Seems to recruit INT to basal bodies of motile cilia which subsequently interacts with actin-modifying proteins such as DAAM1. In cooperation with INVS may down-regulate the canonical Wnt pathway and promote the Wnt-PCP pathway by regulating expression and subcellular location of disheveled proteins. Stabilizes protein levels of JADE1 and promotes its translocation to the nucleus leading to cooperative inhibition of canonical Wnt signaling. Acts as negative regulator of the hippo pathway by association with LATS1 and modifying LATS1-dependent phosphorylation and localization of WWTR1/TAZ. This is Nephrocystin-4 (Nphp4) from Mus musculus (Mouse).